We begin with the raw amino-acid sequence, 123 residues long: Putative iron-sulfur cluster insertion protein ErpA (123 aa).

Iron-sulfur cluster is bound by residues Cys51, Cys115, and Cys117.

It belongs to the HesB/IscA family. Homodimer. The cofactor is iron-sulfur cluster.

Required for insertion of 4Fe-4S clusters. This is Putative iron-sulfur cluster insertion protein ErpA from Burkholderia ambifaria (strain ATCC BAA-244 / DSM 16087 / CCUG 44356 / LMG 19182 / AMMD) (Burkholderia cepacia (strain AMMD)).